The chain runs to 228 residues: Ribonuclease 3 (228 aa).

Positions 8–130 (LKRLERRVDY…IIGAAFLDSD (123 aa)) constitute an RNase III domain. Position 43 (Glu-43) interacts with Mg(2+). Asp-47 is an active-site residue. Mg(2+) is bound by residues Asp-116 and Glu-119. Residue Glu-119 is part of the active site. The 70-residue stretch at 157–226 (DPKTRLQEHL…ANKMLDSLSG (70 aa)) folds into the DRBM domain.

It belongs to the ribonuclease III family. In terms of assembly, homodimer. Mg(2+) serves as cofactor.

The protein resides in the cytoplasm. It catalyses the reaction Endonucleolytic cleavage to 5'-phosphomonoester.. Digests double-stranded RNA. Involved in the processing of primary rRNA transcript to yield the immediate precursors to the large and small rRNAs (23S and 16S). Processes some mRNAs, and tRNAs when they are encoded in the rRNA operon. Processes pre-crRNA and tracrRNA of type II CRISPR loci if present in the organism. The polypeptide is Ribonuclease 3 (Psychromonas ingrahamii (strain DSM 17664 / CCUG 51855 / 37)).